Consider the following 222-residue polypeptide: Kinetochore protein Spc25 (222 aa).

Positions 51 to 100 (RHQRKVGKLQKVIMERREELDKRVSFIEELDRELEATKLRSLAMKDRIKQ) form a coiled coil.

It belongs to the SPC25 family. As to quaternary structure, component of the Ndc80 complex, which is composed of Ndc80, Nuf2 and Spc25.

It localises to the nucleus. It is found in the chromosome. The protein localises to the centromere. The protein resides in the kinetochore. In terms of biological role, acts as a component of the essential kinetochore-associated Ndc80 complex, which is required for chromosome segregation and spindle checkpoint activity during meiosis and mitosis. Required for kinetochore integrity and the organization of stable microtubule binding sites in the outer plate of the kinetochore. Participates in SAC signaling that responds specifically to disruptions in spindle microtubule dynamics. The NDC80 complex synergistically enhances the affinity of the SKA1 complex for microtubules and may allow the NDC80 complex to track depolymerizing microtubules. This Drosophila sechellia (Fruit fly) protein is Kinetochore protein Spc25.